The following is a 373-amino-acid chain: 8-amino-7-oxononanoate synthase (373 aa).

Arg16 is a substrate binding site. 93–94 (GF) lines the pyridoxal 5'-phosphate pocket. Residue His118 participates in substrate binding. Residues Ser165, 190–193 (DEAH), and 222–225 (TFSK) contribute to the pyridoxal 5'-phosphate site. The residue at position 225 (Lys225) is an N6-(pyridoxal phosphate)lysine. A substrate-binding site is contributed by Thr334.

The protein belongs to the class-II pyridoxal-phosphate-dependent aminotransferase family. BioF subfamily. Homodimer. Pyridoxal 5'-phosphate serves as cofactor.

The enzyme catalyses 6-carboxyhexanoyl-[ACP] + L-alanine + H(+) = (8S)-8-amino-7-oxononanoate + holo-[ACP] + CO2. It participates in cofactor biosynthesis; biotin biosynthesis. Its function is as follows. Catalyzes the decarboxylative condensation of pimeloyl-[acyl-carrier protein] and L-alanine to produce 8-amino-7-oxononanoate (AON), [acyl-carrier protein], and carbon dioxide. In Helicobacter pylori (strain J99 / ATCC 700824) (Campylobacter pylori J99), this protein is 8-amino-7-oxononanoate synthase.